The sequence spans 471 residues: Cell division protein FtsP (471 aa).

Positions 1–27 (MSLNRRQFIQASGLALCAGMTPLAAKA) form a signal peptide, tat-type signal. The Plastocyanin-like domain maps to 229–287 (VRLRLLNASNSRRYVMRLSDGRAMNVIASDQGLLPAPMAVNQLSLAPGERREILIDMSQ).

The protein belongs to the FtsP family. Post-translationally, predicted to be exported by the Tat system. The position of the signal peptide cleavage has not been experimentally proven.

Its subcellular location is the periplasm. Its function is as follows. Cell division protein that is required for growth during stress conditions. May be involved in protecting or stabilizing the divisomal assembly under conditions of stress. In Pectobacterium atrosepticum (strain SCRI 1043 / ATCC BAA-672) (Erwinia carotovora subsp. atroseptica), this protein is Cell division protein FtsP.